Reading from the N-terminus, the 1259-residue chain is Lysine-specific demethylase 2B (1259 aa).

One can recognise a JmjC domain in the interval 147–315 (FSHTKLERVV…MQLRVFEIED (169 aa)). Thr208 contributes to the substrate binding site. Fe cation contacts are provided by His211 and Asp213. Lys228 contributes to the substrate binding site. Position 283 (His283) interacts with Fe cation. Residues 388 to 402 (EEKGNLVEKPSKQSG) are compositionally biased toward basic and acidic residues. 2 disordered regions span residues 388 to 463 (EEKG…ATDM) and 536 to 562 (KPSK…SANR). Residues 403 to 413 (DESSTTNSTHS) are compositionally biased toward polar residues. Residues 414 to 423 (NGKDAAEKKQ) are compositionally biased toward basic and acidic residues. A compositionally biased stretch (polar residues) spans 426 to 437 (TLMQQLKRTLSN). The span at 536 to 548 (KPSKNRAVGRPKG) shows a compositional bias: basic residues. A CXXC-type zinc finger spans residues 567-613 (ARRRRTRCRKCEACLRTECGECHFCKDMKKFGGPGRMKQSCIMRQCI). Zn(2+)-binding residues include Cys574, Cys577, Cys580, Cys585, Cys588, Cys591, Cys607, Cys612, Cys623, Cys626, Cys649, Cys652, His657, Cys660, Cys680, and Cys683. The segment at 620–686 (TAVCLVCGEA…CWECPKCNHA (67 aa)) adopts a PHD-type zinc-finger fold. Basic and acidic residues-rich tracts occupy residues 729-763 (KKKV…EDGH) and 771-790 (EKPP…EEKL). The tract at residues 729 to 958 (KKKVEREETP…PPPSLSPPKC (230 aa)) is disordered. The segment covering 835 to 848 (SRSSSPTAGPSTEG) has biased composition (polar residues). Residues 854 to 863 (KKKIRRKRRV) are compositionally biased toward basic residues. Residues 864–877 (SNKELSKELSKELN) are compositionally biased toward basic and acidic residues. Residues 864 to 891 (SNKELSKELSKELNQEIQKTESSLASEN) adopt a coiled-coil conformation. The segment covering 878 to 889 (QEIQKTESSLAS) has biased composition (polar residues). The segment covering 890–908 (ENHHPIKSEPESDNEESKK) has biased composition (basic and acidic residues). Positions 985 to 1030 (AHVMQREVWMAIFSYLSHRDLCICMRICRTWNRWCCDKRLWTQIDL) constitute an F-box domain. 5 LRR repeats span residues 1056–1081 (WTNI…NLSG), 1082–1105 (CSWI…NVQW), 1145–1170 (GLDI…DLSY), 1171–1200 (CNHV…NLSD), and 1201–1225 (CNNV…DLRF).

It belongs to the JHDM1 histone demethylase family. Requires Fe(2+) as cofactor.

It is found in the nucleus. It localises to the nucleolus. Its subcellular location is the chromosome. It carries out the reaction N(6),N(6)-dimethyl-L-lysyl(36)-[histone H3] + 2 2-oxoglutarate + 2 O2 = L-lysyl(36)-[histone H3] + 2 formaldehyde + 2 succinate + 2 CO2. Its activity is regulated as follows. Histone demethylase activity is inhibited by fumarate. In terms of biological role, histone demethylase that demethylates 'Lys-4' and 'Lys-36' of histone H3, thereby playing a central role in histone code. Preferentially demethylates trimethylated H3 'Lys-4' and dimethylated H3 'Lys-36' residue while it has weak or no activity for mono- and tri-methylated H3 'Lys-36'. Preferentially binds the transcribed region of ribosomal RNA and represses the transcription of ribosomal RNA genes which inhibits cell growth and proliferation. This is Lysine-specific demethylase 2B (kdm2b) from Xenopus laevis (African clawed frog).